Consider the following 340-residue polypeptide: tRNA N6-adenosine threonylcarbamoyltransferase (340 aa).

Positions 111 and 115 each coordinate Fe cation. Substrate-binding positions include 134-138 (IISGA), D167, G180, and N273. D301 contacts Fe cation.

Belongs to the KAE1 / TsaD family. Fe(2+) serves as cofactor.

The protein resides in the cytoplasm. The catalysed reaction is L-threonylcarbamoyladenylate + adenosine(37) in tRNA = N(6)-L-threonylcarbamoyladenosine(37) in tRNA + AMP + H(+). In terms of biological role, required for the formation of a threonylcarbamoyl group on adenosine at position 37 (t(6)A37) in tRNAs that read codons beginning with adenine. Is involved in the transfer of the threonylcarbamoyl moiety of threonylcarbamoyl-AMP (TC-AMP) to the N6 group of A37, together with TsaE and TsaB. TsaD likely plays a direct catalytic role in this reaction. In Wigglesworthia glossinidia brevipalpis, this protein is tRNA N6-adenosine threonylcarbamoyltransferase.